Reading from the N-terminus, the 477-residue chain is Glycogen synthase (477 aa).

Lys-15 is an ADP-alpha-D-glucose binding site.

This sequence belongs to the glycosyltransferase 1 family. Bacterial/plant glycogen synthase subfamily.

The catalysed reaction is [(1-&gt;4)-alpha-D-glucosyl](n) + ADP-alpha-D-glucose = [(1-&gt;4)-alpha-D-glucosyl](n+1) + ADP + H(+). It functions in the pathway glycan biosynthesis; glycogen biosynthesis. Functionally, synthesizes alpha-1,4-glucan chains using ADP-glucose. This Escherichia coli O139:H28 (strain E24377A / ETEC) protein is Glycogen synthase.